Here is a 496-residue protein sequence, read N- to C-terminus: MEFSCVHFLQNKTILVTGATGFLAKVFVEKILRVQPNVNKLYLVVRASDNEAATKRLRTEAFEKDLFKVLRDNLGDEKLNTLLSEKVVPVAGDIAMDHLGMKDSNLRERMQKEIDIVVNVAATTNFDERYDIGLGINTFGALNVLNFAKKCVKAQLLLHVSTAYVCGEKPGLLPEKPFVMEEICNENGLQLDINLERELMKQRLKELNEQGCSEEGTTFYMKELGMERAKLHGWPNTYVFTKSMGEMLLGNHKENLPLVIIRPTMITSTLFEPFPGWIEGLRTVDSVIIAYGKGVLKCFLVDVNSVCDMIPADMVANAMIAAAATHAGGSKVHMVYQVGSSHQNPIIYGEIREILFCYFTKNSLRSRNGSMITVSKMKLIPTLALFSLYMTIRYKLPVQLLKLVDIIYPSREGDEYKNKNRKIDMVMRLVKLYEPYVLFKGIFDDRNTKNLCAKQKEEDNRNSENFMFDFDPKIIKWKDYLINVHIPGLITHVLKK.

The protein belongs to the fatty acyl-CoA reductase family.

The enzyme catalyses a long-chain fatty acyl-CoA + 2 NADPH + 2 H(+) = a long-chain primary fatty alcohol + 2 NADP(+) + CoA. Functionally, catalyzes the reduction of fatty acyl-CoA to fatty alcohols. Catalyzes specifically the formation of C16:0 fatty alcohol. The chain is Fatty acyl-CoA reductase 8 (FAR8) from Arabidopsis thaliana (Mouse-ear cress).